A 69-amino-acid polypeptide reads, in one-letter code: Amphipathic peptide OcyC2 (69 aa).

The first 23 residues, 1-23 (MKTQFAILMIAVVLMQMLVQTEG), serve as a signal peptide directing secretion. At I37 the chain carries Isoleucine amide. The propeptide occupies 41-69 (GLKKLDQLDDTFDSDLSDADVKLLREMFK).

Belongs to the non-disulfide-bridged peptide (NDBP) superfamily. Short antimicrobial peptide (group 4) family. Expressed by the venom gland.

The protein localises to the secreted. Its subcellular location is the target cell membrane. In terms of biological role, amphipathic peptide with antimicrobial activity. Shows antifungal activity with MIC values ranging from 25 to 200 uM. Does not show antifungal activity against Candida glabrata (ATCC90030) and Candida parapsilosis (ATCC22019) (MIC&gt;400 uM). The polypeptide is Amphipathic peptide OcyC2 (Opisthacanthus cayaporum (South American scorpion)).